The following is a 465-amino-acid chain: Glutathione reductase (465 aa).

FAD is bound by residues S16 and G17. S16 provides a ligand contact to glutathione. R23 is a glutathione binding site. The FAD site is built by E42, T49, C50, and K58. An intrachain disulfide couples C50 to C55. Y108 contacts glutathione. Residue G124 participates in FAD binding. NADP(+)-binding residues include A187, I190, E193, R210, R216, and G276. D318 is an FAD binding site. L324 is a binding site for NADP(+). T326 lines the FAD pocket. Residue R334 participates in glutathione binding. V357 is an NADP(+) binding site. H454 is a binding site for FAD. H454 acts as the Proton acceptor in catalysis.

It belongs to the class-I pyridine nucleotide-disulfide oxidoreductase family. Requires FAD as cofactor.

The protein localises to the cytoplasm. It carries out the reaction 2 glutathione + NADP(+) = glutathione disulfide + NADPH + H(+). Functionally, catalyzes the reduction of glutathione disulfide (GSSG) to reduced glutathione (GSH). Constitutes the major mechanism to maintain a high GSH:GSSG ratio in the cytosol. The amount of GSH may affect the determination of cell fate. This is Glutathione reductase (gsr) from Dictyostelium discoideum (Social amoeba).